The sequence spans 43 residues: Alpha-conotoxin-like Leo-A1 (43 aa).

A propeptide spanning residues 1–26 (LTLDRASDDTDVAAEIMSGLIALAID) is cleaved from the precursor. 2 cysteine pairs are disulfide-bonded: C28/C34 and C29/C42. Residues 30 to 32 (SDS) form a lacks the Ser-Xaa-Pro motif that is crucial for potent interaction with nAChR region.

This sequence belongs to the conotoxin A superfamily. As to expression, expressed by the venom duct.

The protein resides in the secreted. Alpha-conotoxins act on postsynaptic membranes, they bind to the nicotinic acetylcholine receptors (nAChR) and thus inhibit them. Has possibly a distinct nAChR binding mode from other alpha-conotoxins, due to a different three residue motif (lacks the Ser-Xaa-Pro motif). The polypeptide is Alpha-conotoxin-like Leo-A1 (Conus leopardus (Leopard cone)).